The chain runs to 388 residues: Succinate--CoA ligase [ADP-forming] subunit beta (388 aa).

The region spanning 9 to 244 (KEIFRSMGVA…LEEEDPKEIE (236 aa)) is the ATP-grasp domain. Residues K46, 53–55 (GRG), E99, C102, and E107 contribute to the ATP site. Residues N199 and D213 each contribute to the Mg(2+) site. Substrate is bound by residues N264 and 321–323 (GIM).

It belongs to the succinate/malate CoA ligase beta subunit family. Heterotetramer of two alpha and two beta subunits. Requires Mg(2+) as cofactor.

It carries out the reaction succinate + ATP + CoA = succinyl-CoA + ADP + phosphate. The enzyme catalyses GTP + succinate + CoA = succinyl-CoA + GDP + phosphate. It functions in the pathway carbohydrate metabolism; tricarboxylic acid cycle; succinate from succinyl-CoA (ligase route): step 1/1. Its function is as follows. Succinyl-CoA synthetase functions in the citric acid cycle (TCA), coupling the hydrolysis of succinyl-CoA to the synthesis of either ATP or GTP and thus represents the only step of substrate-level phosphorylation in the TCA. The beta subunit provides nucleotide specificity of the enzyme and binds the substrate succinate, while the binding sites for coenzyme A and phosphate are found in the alpha subunit. In Staphylococcus aureus (strain bovine RF122 / ET3-1), this protein is Succinate--CoA ligase [ADP-forming] subunit beta.